A 1465-amino-acid chain; its full sequence is DNA polymerase III PolC-type (1465 aa).

Residues 427–583 (YVVFDVETTG…YDAEATGRLL (157 aa)) enclose the Exonuclease domain.

The protein belongs to the DNA polymerase type-C family. PolC subfamily.

The protein resides in the cytoplasm. It carries out the reaction DNA(n) + a 2'-deoxyribonucleoside 5'-triphosphate = DNA(n+1) + diphosphate. Its function is as follows. Required for replicative DNA synthesis. This DNA polymerase also exhibits 3' to 5' exonuclease activity. The chain is DNA polymerase III PolC-type from Streptococcus pyogenes serotype M1.